The chain runs to 705 residues: Polyribonucleotide nucleotidyltransferase (705 aa).

Aspartate 486 and aspartate 492 together coordinate Mg(2+). Residues 553–612 form the KH domain; it reads PQFHTMKVDPEKIRDIIGKGGATIRSITEETGASIDIDDDGTVKIYGDDGDSLQGAINRI. The 69-residue stretch at 622–690 folds into the S1 motif domain; that stretch reads GEVYKGKVVR…QRGRIKLSIK (69 aa).

It belongs to the polyribonucleotide nucleotidyltransferase family. Component of the RNA degradosome, which is a multiprotein complex involved in RNA processing and mRNA degradation. It depends on Mg(2+) as a cofactor.

The protein resides in the cytoplasm. It carries out the reaction RNA(n+1) + phosphate = RNA(n) + a ribonucleoside 5'-diphosphate. In terms of biological role, involved in mRNA degradation. Catalyzes the phosphorolysis of single-stranded polyribonucleotides processively in the 3'- to 5'-direction. This Teredinibacter turnerae (strain ATCC 39867 / T7901) protein is Polyribonucleotide nucleotidyltransferase.